Here is a 477-residue protein sequence, read N- to C-terminus: Protoporphyrinogen oxidase (477 aa).

FAD-binding positions include 9-14 (GGGISG), tryptophan 42, 57-60 (GPRG), valine 257, alanine 449, and 454-456 (VAV).

It belongs to the protoporphyrinogen/coproporphyrinogen oxidase family. Protoporphyrinogen oxidase subfamily. Monomer. Homodimer. FAD serves as cofactor. As to expression, detected in liver (at protein level).

The protein localises to the mitochondrion inner membrane. The enzyme catalyses protoporphyrinogen IX + 3 O2 = protoporphyrin IX + 3 H2O2. It functions in the pathway porphyrin-containing compound metabolism; protoporphyrin-IX biosynthesis; protoporphyrin-IX from protoporphyrinogen-IX: step 1/1. Its function is as follows. Catalyzes the 6-electron oxidation of protoporphyrinogen-IX to form protoporphyrin-IX. This is Protoporphyrinogen oxidase (PPOX) from Bos taurus (Bovine).